We begin with the raw amino-acid sequence, 504 residues long: Maturase K (504 aa).

This sequence belongs to the intron maturase 2 family. MatK subfamily.

It is found in the plastid. The protein localises to the chloroplast. Usually encoded in the trnK tRNA gene intron. Probably assists in splicing its own and other chloroplast group II introns. In Arabidopsis lyrata (Lyre-leaved rock-cress), this protein is Maturase K.